The primary structure comprises 495 residues: Lysine--tRNA ligase (495 aa).

Residues E406 and E413 each coordinate Mg(2+).

It belongs to the class-II aminoacyl-tRNA synthetase family. In terms of assembly, homodimer. It depends on Mg(2+) as a cofactor.

The protein localises to the cytoplasm. The enzyme catalyses tRNA(Lys) + L-lysine + ATP = L-lysyl-tRNA(Lys) + AMP + diphosphate. In Leptospira interrogans serogroup Icterohaemorrhagiae serovar Lai (strain 56601), this protein is Lysine--tRNA ligase.